The following is a 205-amino-acid chain: Urease accessory protein UreG (205 aa).

14 to 21 (GPVGSGKT) contributes to the GTP binding site.

It belongs to the SIMIBI class G3E GTPase family. UreG subfamily. Homodimer. UreD, UreF and UreG form a complex that acts as a GTP-hydrolysis-dependent molecular chaperone, activating the urease apoprotein by helping to assemble the nickel containing metallocenter of UreC. The UreE protein probably delivers the nickel.

The protein resides in the cytoplasm. Its function is as follows. Facilitates the functional incorporation of the urease nickel metallocenter. This process requires GTP hydrolysis, probably effectuated by UreG. The protein is Urease accessory protein UreG of Proteus mirabilis (strain HI4320).